The following is a 107-amino-acid chain: Phosphoribosyl-ATP pyrophosphatase (107 aa).

This sequence belongs to the PRA-PH family.

The protein localises to the cytoplasm. The catalysed reaction is 1-(5-phospho-beta-D-ribosyl)-ATP + H2O = 1-(5-phospho-beta-D-ribosyl)-5'-AMP + diphosphate + H(+). It functions in the pathway amino-acid biosynthesis; L-histidine biosynthesis; L-histidine from 5-phospho-alpha-D-ribose 1-diphosphate: step 2/9. This Bacillus anthracis (strain A0248) protein is Phosphoribosyl-ATP pyrophosphatase.